A 68-amino-acid polypeptide reads, in one-letter code: MGKILLALIRLYQRFSRYTPPSCIYTPTCSHYGYQAIAKYGAFKGTWLTLKRIARCHPWAQGGEDPVP.

The protein belongs to the UPF0161 family.

It is found in the cell membrane. Functionally, could be involved in insertion of integral membrane proteins into the membrane. This is Putative membrane protein insertion efficiency factor from Herpetosiphon aurantiacus (strain ATCC 23779 / DSM 785 / 114-95).